A 523-amino-acid polypeptide reads, in one-letter code: Sensory neuron membrane protein 1 (523 aa).

Topologically, residues 1 to 11 (MQLPKELKYAA) are cytoplasmic. Residues 12 to 32 (IAGGVALFGLIFGWVLFPTIL) traverse the membrane as a helical segment. The Extracellular segment spans residues 33–458 (KSQLKKEMAL…HQLFIPKRVV (426 aa)). 2 N-linked (GlcNAc...) asparagine glycosylation sites follow: N67 and N229. 3 disulfide bridges follow: C268-C333, C297-C352, and C335-C341. N440 carries N-linked (GlcNAc...) asparagine glycosylation. The chain crosses the membrane as a helical span at residues 459-479 (GVLRWWVVSFGSLGAVIGIVF). The Cytoplasmic portion of the chain corresponds to 480–523 (HFRDHIMRLAVSGDTKVSKVTPEEPEQKDISVIGQAQEPAKVNI).

The protein belongs to the CD36 family. In terms of tissue distribution, detected in sensory neurons in the antenna.

The protein resides in the cell membrane. Its function is as follows. Plays an olfactory role that is not restricted to pheromone sensitivity. The sequence is that of Sensory neuron membrane protein 1 from Heliothis virescens (Tobacco budworm moth).